Reading from the N-terminus, the 371-residue chain is Terpene cyclase 6 (371 aa).

Residues aspartate 144, asparagine 266, serine 270, and glutamate 274 each coordinate Mg(2+). A D(D/E)XX(D/E) motif motif is present at residues 144–148; it reads DDVME. An NSE motif motif is present at residues 266–274; that stretch reads NDLYSYDKE. The short motif at 352 to 359 is the WxxxxxRY motif element; it reads HHATLGRY. Arginine 358 and tyrosine 359 together coordinate (2E,6E)-farnesyl diphosphate.

The protein belongs to the terpene synthase family. In terms of assembly, homodimer. Mg(2+) serves as cofactor.

The catalysed reaction is (2E,6E)-farnesyl diphosphate + H2O = (-)-alpha-acorenol + diphosphate. The protein operates within sesquiterpene biosynthesis. In terms of biological role, terpene cyclase that catalyzes the cyclization of farnesyl diphosphate (FPP) to the spirocyclic sesquiterpene alpha-acorenol. The polypeptide is Terpene cyclase 6 (Gibberella fujikuroi (strain CBS 195.34 / IMI 58289 / NRRL A-6831) (Bakanae and foot rot disease fungus)).